Reading from the N-terminus, the 156-residue chain is Cytochrome c-type biogenesis protein CcmE (156 aa).

Topologically, residues 1–8 are cytoplasmic; it reads MNPLRRKR. A helical; Signal-anchor for type II membrane protein transmembrane segment spans residues 9–29; it reads LLIILAILAGVGIAVGLAMSA. At 30-156 the chain is on the periplasmic side; sequence LRENINLFYT…RIRSLPRRAK (127 aa). Residues H124 and Y128 each coordinate heme.

The protein belongs to the CcmE/CycJ family.

It is found in the cell inner membrane. Heme chaperone required for the biogenesis of c-type cytochromes. Transiently binds heme delivered by CcmC and transfers the heme to apo-cytochromes in a process facilitated by CcmF and CcmH. This chain is Cytochrome c-type biogenesis protein CcmE, found in Pseudomonas fluorescens.